Reading from the N-terminus, the 72-residue chain is Conotoxin Vc6.16 (72 aa).

Residues 1 to 19 (MQKLIILLLVAAVLMSTQA) form the signal peptide. A propeptide spanning residues 20-44 (LFQEKRPKEKIDLLSKRKTDAEKQQ) is cleaved from the precursor. 3 cysteine pairs are disulfide-bonded: C48–C62, C55–C66, and C61–C71.

This sequence belongs to the conotoxin O2 superfamily. In terms of tissue distribution, expressed by the venom duct.

It is found in the secreted. In terms of biological role, inhibits voltage-gated ion channels. This chain is Conotoxin Vc6.16, found in Conus victoriae (Queen Victoria cone).